We begin with the raw amino-acid sequence, 562 residues long: Bacillolysin (562 aa).

Residues Met-1–Ala-24 form the signal peptide. A propeptide spans His-25–Pro-245 (activation peptide). 3 residues coordinate Ca(2+): Asp-303, Asp-305, and Asp-384. Zn(2+) is bound at residue His-388. Glu-389 is a catalytic residue. His-392 and Glu-412 together coordinate Zn(2+). Ca(2+) contacts are provided by Glu-423, Asn-429, Asp-431, Glu-433, Glu-436, Tyr-439, Thr-440, and Asp-446. His-477 functions as the Proton donor in the catalytic mechanism.

Belongs to the peptidase M4 family. The cofactor is Ca(2+). Zn(2+) is required as a cofactor.

It localises to the secreted. The catalysed reaction is Similar, but not identical, to that of thermolysin.. Its function is as follows. Extracellular zinc metalloprotease. In Priestia megaterium (strain ATCC 14581 / DSM 32 / CCUG 1817 / JCM 2506 / NBRC 15308 / NCIMB 9376 / NCTC 10342 / NRRL B-14308 / VKM B-512 / Ford 19) (Bacillus megaterium), this protein is Bacillolysin.